A 262-amino-acid polypeptide reads, in one-letter code: Catechol O-methyltransferase domain-containing protein 1 (262 aa).

Residues 12–32 (AALALGSAALGAAFATGLLLG) traverse the membrane as a helical; Signal-anchor for type II membrane protein segment. S-adenosyl-L-methionine-binding positions include Asp108, 110-111 (GT), Ser116, Glu134, Val135, Ala163, Asp185, Asp187, and Tyr194.

It belongs to the class I-like SAM-binding methyltransferase superfamily. Cation-dependent O-methyltransferase family. In terms of assembly, homodimer.

The protein localises to the membrane. Putative O-methyltransferase. This Mus musculus (Mouse) protein is Catechol O-methyltransferase domain-containing protein 1 (Comtd1).